We begin with the raw amino-acid sequence, 251 residues long: MEVCGEPLIRAAPEPLRDERIQTAELLCADLDLSVSLTPERPADRRRRQVRFNVDPVLITVNPEPRNNQPTARKPPNKDEHGVETDREQSRECDGQQTHEAELNTTLALRAELEEEAEQTFDAEKAVREKLQSSTLTKNHVNSKAAEGLNFPRSQQLYRALVSVSLSRDQLISQALQDRPALAPPTASQNNKFSSPPPEGPDILQFYSPDKMLRETPLLPGDHIPLPRPRPVPRPAHTTFHLHRLHKLWES.

Disordered regions lie at residues 58-99 and 180-235; these read LITV…QQTH and PALA…VPRP. A compositionally biased stretch (basic and acidic residues) spans 76–99; sequence PNKDEHGVETDREQSRECDGQQTH.

It belongs to the PPP1R35 family.

It localises to the cytoplasm. Its subcellular location is the cytoskeleton. The protein resides in the microtubule organizing center. It is found in the centrosome. The protein localises to the centriole. During centriole duplication, may play a role in the centriole elongation by promoting the recruitment of the microtubule-binding elongation machinery, leading to the centriole to centrosome conversion. In addition may play a role in the primary cilia assembly. This is Protein phosphatase 1 regulatory subunit 35 from Danio rerio (Zebrafish).